Consider the following 113-residue polypeptide: U11-theraphotoxin-Hhn1a (113 aa).

The first 21 residues, 1–21 (MNTVRVTFLLVFVLAVSLGQA), serve as a signal peptide directing secretion. Positions 22-74 (DKDENRMVMQEKTEQGKSYLDFAENLLLQKLEELEAKLLEEDSEESRNSRQKR) are excised as a propeptide. 3 cysteine pairs are disulfide-bonded: Cys75–Cys90, Cys82–Cys95, and Cys89–Cys110.

It belongs to the neurotoxin 14 (magi-1) family. 01 (HNTX-16) subfamily. Expressed by the venom gland.

It is found in the secreted. In terms of biological role, probable ion channel inhibitor. The sequence is that of U11-theraphotoxin-Hhn1a from Cyriopagopus hainanus (Chinese bird spider).